Here is a 70-residue protein sequence, read N- to C-terminus: Virion membrane protein OPG139 (70 aa).

Residues 1-21 traverse the membrane as a helical segment; that stretch reads MIGILLLIGICVAVTVAILYS. At 22-70 the chain is on the virion surface side; sequence MYNKIKNSQNPNPSPNLNSPPPEPKNTKFVNNLEKDHISSLYNLVKSSV. The interval 30-50 is disordered; sequence QNPNPSPNLNSPPPEPKNTKF. Residues 33 to 45 show a composition bias toward pro residues; the sequence is NPSPNLNSPPPEP. Ser-40 is subject to Phosphoserine; by host.

Belongs to the orthopoxvirus OPG139 family. Post-translationally, phosphorylated by a OPG054-independent mechanism.

It localises to the virion membrane. Its function is as follows. Essential for the encapsidation of DNA into immature virions (IV) and the subsequent maturation of IV into mature virions (MV). This chain is Virion membrane protein OPG139 (OPG139), found in Homo sapiens (Human).